We begin with the raw amino-acid sequence, 937 residues long: Periplasmic nitrate reductase (937 aa).

Residues 1–42 (MTSKIQGKKPTLSRRDFIKSAAAASAAASVGLSIPSVMSAEA) constitute a signal peptide (tat-type signal). Residues 49–110 (WKWDKSVCRF…FCAKIMYGAD (62 aa)) form the 4Fe-4S Mo/W bis-MGD-type domain. The [4Fe-4S] cluster site is built by Cys-56, Cys-59, Cys-63, and Cys-96. Residues Lys-98, Gln-166, Asn-191, Cys-195, 228–235 (WGANMAEM), Met-433, Gln-437, Asn-543, 568–569 (SE), Lys-591, Asp-618, and 827–836 (TGRVLEHWHS) each bind Mo-bis(molybdopterin guanine dinucleotide). Trp-903 contacts substrate. The Mo-bis(molybdopterin guanine dinucleotide) site is built by Asn-911 and Lys-928.

It belongs to the prokaryotic molybdopterin-containing oxidoreductase family. NasA/NapA/NarB subfamily. Component of the periplasmic nitrate reductase NapAB complex composed of NapA and NapB. It depends on [4Fe-4S] cluster as a cofactor. Mo-bis(molybdopterin guanine dinucleotide) serves as cofactor. Post-translationally, predicted to be exported by the Tat system. The position of the signal peptide cleavage has not been experimentally proven.

The protein resides in the periplasm. The enzyme catalyses 2 Fe(II)-[cytochrome] + nitrate + 2 H(+) = 2 Fe(III)-[cytochrome] + nitrite + H2O. Its function is as follows. Catalytic subunit of the periplasmic nitrate reductase complex NapAB. Receives electrons from NapB and catalyzes the reduction of nitrate to nitrite. This is Periplasmic nitrate reductase from Helicobacter hepaticus (strain ATCC 51449 / 3B1).